A 123-amino-acid polypeptide reads, in one-letter code: uncharacterized protein (123 aa).

This sequence to M.tuberculosis Rv0477.

This is an uncharacterized protein from Mycobacterium leprae (strain TN).